The sequence spans 510 residues: Maturase K (510 aa).

This sequence belongs to the intron maturase 2 family. MatK subfamily.

It localises to the plastid. The protein localises to the chloroplast. Usually encoded in the trnK tRNA gene intron. Probably assists in splicing its own and other chloroplast group II introns. This is Maturase K from Gratiola officinalis (Hedgehyssop).